We begin with the raw amino-acid sequence, 108 residues long: Ig kappa chain V-V region MOPC 149 (108 aa).

Positions 1–23 are framework-1; it reads DIQMTQSPDYLSASVGETVTITC. A disulfide bridge links C23 with C88. The tract at residues 24-34 is complementarity-determining-1; sequence RASENIYSYLA. The interval 35 to 49 is framework-2; it reads WYQQKQGKSPQLLVY. The interval 50–56 is complementarity-determining-2; that stretch reads DAKTLVE. A framework-3 region spans residues 57-88; that stretch reads GVPSRFSGSGSGTQFSLKINSLQPEDFGSYYC. The complementarity-determining-3 stretch occupies residues 89 to 97; it reads QHHYGIPFT. The framework-4 stretch occupies residues 98-108; it reads FGSGTKLEIKR.

The polypeptide is Ig kappa chain V-V region MOPC 149 (Mus musculus (Mouse)).